The chain runs to 149 residues: Transcriptional repressor NrdR (149 aa).

A zinc finger spans residues 3–34 (CPFCSATDTKVIDSRLVADGHQVRRRRECTLC). The ATP-cone domain occupies 49–139 (PRVIKRDDTR…VYRAFEDVSQ (91 aa)).

The protein belongs to the NrdR family. It depends on Zn(2+) as a cofactor.

In terms of biological role, negatively regulates transcription of bacterial ribonucleotide reductase nrd genes and operons by binding to NrdR-boxes. The chain is Transcriptional repressor NrdR from Shewanella denitrificans (strain OS217 / ATCC BAA-1090 / DSM 15013).